We begin with the raw amino-acid sequence, 81 residues long: uncharacterized protein (81 aa).

The segment at 55-81 is disordered; sequence LDKRNSNNKIEKSENTGENHDNNQDQK.

This is an uncharacterized protein from Thermoproteus tenax virus 1 (strain KRA1) (TTV1).